A 54-amino-acid chain; its full sequence is Hemoglobin subunit omega (54 aa).

Residues 2–54 (HWTAEEKQIILAIWAKIDIEEAGAAALSRLLVVYPWTQRYFKNFGNLSSPTAI) form the Globin domain.

This sequence belongs to the globin family.

Hemoglobin omega chain is an embryonic-type beta-type chain found in prenatal and neonatal marsupials. This Notamacropus eugenii (Tammar wallaby) protein is Hemoglobin subunit omega.